The sequence spans 318 residues: Holliday junction branch migration complex subunit RuvB (318 aa).

The tract at residues 1-168 (MPENLEIRPS…FGYVAKIVDY (168 aa)) is large ATPase domain (RuvB-L). ATP contacts are provided by Ile-7, Arg-8, Gly-49, Lys-52, Thr-53, Thr-54, Arg-158, Tyr-168, and Arg-205. Thr-53 is a Mg(2+) binding site. The tract at residues 169-239 (TLEDMIQIIR…IVNKTFDSIG (71 aa)) is small ATPAse domain (RuvB-S). Positions 242–318 (NQGLSQINIE…RDYLLELKTN (77 aa)) are head domain (RuvB-H). DNA is bound by residues Arg-278, Lys-297, and Arg-302.

Belongs to the RuvB family. As to quaternary structure, homohexamer. Forms an RuvA(8)-RuvB(12)-Holliday junction (HJ) complex. HJ DNA is sandwiched between 2 RuvA tetramers; dsDNA enters through RuvA and exits via RuvB. An RuvB hexamer assembles on each DNA strand where it exits the tetramer. Each RuvB hexamer is contacted by two RuvA subunits (via domain III) on 2 adjacent RuvB subunits; this complex drives branch migration. In the full resolvosome a probable DNA-RuvA(4)-RuvB(12)-RuvC(2) complex forms which resolves the HJ.

Its subcellular location is the cytoplasm. The enzyme catalyses ATP + H2O = ADP + phosphate + H(+). In terms of biological role, the RuvA-RuvB-RuvC complex processes Holliday junction (HJ) DNA during genetic recombination and DNA repair, while the RuvA-RuvB complex plays an important role in the rescue of blocked DNA replication forks via replication fork reversal (RFR). RuvA specifically binds to HJ cruciform DNA, conferring on it an open structure. The RuvB hexamer acts as an ATP-dependent pump, pulling dsDNA into and through the RuvAB complex. RuvB forms 2 homohexamers on either side of HJ DNA bound by 1 or 2 RuvA tetramers; 4 subunits per hexamer contact DNA at a time. Coordinated motions by a converter formed by DNA-disengaged RuvB subunits stimulates ATP hydrolysis and nucleotide exchange. Immobilization of the converter enables RuvB to convert the ATP-contained energy into a lever motion, pulling 2 nucleotides of DNA out of the RuvA tetramer per ATP hydrolyzed, thus driving DNA branch migration. The RuvB motors rotate together with the DNA substrate, which together with the progressing nucleotide cycle form the mechanistic basis for DNA recombination by continuous HJ branch migration. Branch migration allows RuvC to scan DNA until it finds its consensus sequence, where it cleaves and resolves cruciform DNA. The sequence is that of Holliday junction branch migration complex subunit RuvB from Mesomycoplasma hyopneumoniae (strain 232) (Mycoplasma hyopneumoniae).